Here is a 1432-residue protein sequence, read N- to C-terminus: ABC transporter B family member 3 (1432 aa).

Disordered stretches follow at residues 1-21 (MDDGNENNENAQHDEYDEEEI) and 48-149 (ITQP…KTEE). 3 stretches are compositionally biased toward low complexity: residues 52–62 (SNNNNNSNNNN), 76–106 (NNNNNNNNNNNNNNNNNNNNNNNSNNSFNNN), and 118–135 (NTNENNNKNNNNNNNNND). Residues 117–163 (ENTNENNNKNNNNNNNNNDDYNDGADERVKTEEEIKKEAENELNQSV) adopt a coiled-coil conformation. One can recognise an ABC transmembrane type-1 1 domain in the interval 180 to 479 (MFLGTIAAVI…ASPCLALFAQ (300 aa)). 6 helical membrane-spanning segments follow: residues 185 to 205 (IAAVINGAAMPTVSLVFGLVV), 232 to 252 (LLMLGGGVFVLSYLETTLWMI), 303 to 323 (KVGRFIHFFSTFVAGFVIGFT), 325 to 345 (GWQLTLVITSVSPLLAIGGFF), 410 to 430 (GLGLGFVQFVILGTYALAFWY), and 457 to 477 (FFAVIIGATSIGQASPCLALF). An ABC transporter 1 domain is found at 514 to 750 (IEFKDVGFHY…QGLYFDLVEK (237 aa)). 549–556 (GDSGGGKS) is a binding site for ATP. The interval 787–819 (KRSLRKNESESNKKDKEDSNNKKKKKSNKKKVE) is disordered. Basic and acidic residues predominate over residues 791-807 (RKNESESNKKDKEDSNN). Positions 837 to 1157 (WCFGFLSAVG…ASSFAPDLAK (321 aa)) constitute an ABC transmembrane type-1 2 domain. The next 6 helical transmembrane spans lie at 838-858 (CFGFLSAVGTGAVYPGFAMVF), 882-902 (LMFVALAVGAGISNFFQGFLF), 968-988 (MVGGLVIAFYSGWQLTLVIIA), 989-1009 (CFPLVVITSKVQMQILAGFSS), 1060-1080 (ISGFAFGFTQLILFCVYCLSF), and 1134-1154 (VFFAIVMSAIGVGQASSFAPD). The region spanning 1192-1428 (IEFKNLHFSY…EGPYSQLWYN (237 aa)) is the ABC transporter 2 domain. Position 1227–1234 (1227–1234 (GDSGGGKS)) interacts with ATP.

It belongs to the ABC transporter superfamily. ABCB family. Multidrug resistance exporter (TC 3.A.1.201) subfamily.

The protein localises to the membrane. This is ABC transporter B family member 3 (abcB3) from Dictyostelium discoideum (Social amoeba).